The chain runs to 354 residues: Elongation factor Ts, mitochondrial (354 aa).

Residues methionine 1–tyrosine 47 constitute a mitochondrion transit peptide.

The protein belongs to the EF-Ts family.

It localises to the mitochondrion. Functionally, associates with the EF-Tu.GDP complex and induces the exchange of GDP to GTP. It remains bound to the aminoacyl-tRNA.EF-Tu.GTP complex up to the GTP hydrolysis stage on the ribosome. This Heterostelium pallidum (strain ATCC 26659 / Pp 5 / PN500) (Cellular slime mold) protein is Elongation factor Ts, mitochondrial (tsfm).